A 1279-amino-acid polypeptide reads, in one-letter code: ATP-dependent helicase/nuclease subunit A (1279 aa).

The UvrD-like helicase ATP-binding domain occupies 4-499 (TKWTDEQRQA…VKLFKNFRSR (496 aa)). Residue 25–32 (AGAGAGKT) coordinates ATP. Residues 526 to 853 (EEALKVGASY…RIMSIHKSKG (328 aa)) form the UvrD-like helicase C-terminal domain.

The protein belongs to the helicase family. AddA subfamily. In terms of assembly, heterodimer of AddA and AddB/RexB. The cofactor is Mg(2+).

It carries out the reaction Couples ATP hydrolysis with the unwinding of duplex DNA by translocating in the 3'-5' direction.. The enzyme catalyses ATP + H2O = ADP + phosphate + H(+). The heterodimer acts as both an ATP-dependent DNA helicase and an ATP-dependent, dual-direction single-stranded exonuclease. Recognizes the chi site generating a DNA molecule suitable for the initiation of homologous recombination. The AddA nuclease domain is required for chi fragment generation; this subunit has the helicase and 3' -&gt; 5' nuclease activities. The polypeptide is ATP-dependent helicase/nuclease subunit A (Clostridium botulinum (strain Okra / Type B1)).